A 128-amino-acid polypeptide reads, in one-letter code: S-adenosylmethionine decarboxylase proenzyme (128 aa).

Catalysis depends on Ser-63, which acts as the Schiff-base intermediate with substrate; via pyruvic acid. Position 63 is a pyruvic acid (Ser); by autocatalysis (Ser-63). Catalysis depends on His-68, which acts as the Proton acceptor; for processing activity. The Proton donor; for catalytic activity role is filled by Cys-83.

The protein belongs to the prokaryotic AdoMetDC family. Type 1 subfamily. In terms of assembly, heterotetramer of two alpha and two beta chains arranged as a dimer of alpha/beta heterodimers. The cofactor is pyruvate. In terms of processing, is synthesized initially as an inactive proenzyme. Formation of the active enzyme involves a self-maturation process in which the active site pyruvoyl group is generated from an internal serine residue via an autocatalytic post-translational modification. Two non-identical subunits are generated from the proenzyme in this reaction, and the pyruvate is formed at the N-terminus of the alpha chain, which is derived from the carboxyl end of the proenzyme. The post-translation cleavage follows an unusual pathway, termed non-hydrolytic serinolysis, in which the side chain hydroxyl group of the serine supplies its oxygen atom to form the C-terminus of the beta chain, while the remainder of the serine residue undergoes an oxidative deamination to produce ammonia and the pyruvoyl group blocking the N-terminus of the alpha chain.

The catalysed reaction is S-adenosyl-L-methionine + H(+) = S-adenosyl 3-(methylsulfanyl)propylamine + CO2. The protein operates within amine and polyamine biosynthesis; S-adenosylmethioninamine biosynthesis; S-adenosylmethioninamine from S-adenosyl-L-methionine: step 1/1. Its function is as follows. Catalyzes the decarboxylation of S-adenosylmethionine to S-adenosylmethioninamine (dcAdoMet), the propylamine donor required for the synthesis of the polyamines spermine and spermidine from the diamine putrescine. This Leptospira borgpetersenii serovar Hardjo-bovis (strain JB197) protein is S-adenosylmethionine decarboxylase proenzyme.